Reading from the N-terminus, the 450-residue chain is Allergen Fus c 3 (450 aa).

Disordered stretches follow at residues 18–87 (EPEM…SRAQ), 99–148 (DLHA…HLPP), 185–377 (SGHP…NLVE), and 398–426 (QIRH…RRVS). Over residues 31-46 (PHQQPISSPNRTSRNT) the composition is skewed to polar residues. Over residues 101–112 (HAPSHPSHLSHG) the composition is skewed to low complexity. The span at 113–125 (APHEQEHAHEIQR) shows a compositional bias: basic and acidic residues. A compositionally biased stretch (basic residues) spans 272–286 (RPRKPARARRQKKEP). Residues 291–304 (DASQGARSSSTGGT) show a composition bias toward polar residues. Low complexity predominate over residues 305 to 341 (AHSVSDAASPSSTSHQSRASLTSKSASMTSAASTASS). Over residues 356–377 (TLDKPNDTAEDRRTRASHNLVE) the composition is skewed to basic and acidic residues. The bHLH domain occupies 368–441 (RTRASHNLVE…EMARRHIEAL (74 aa)).

The chain is Allergen Fus c 3 from Fusarium culmorum.